Consider the following 214-residue polypeptide: Orotate phosphoribosyltransferase (214 aa).

Lys26 contacts 5-phospho-alpha-D-ribose 1-diphosphate. Position 34–35 (34–35 (FF)) interacts with orotate. 5-phospho-alpha-D-ribose 1-diphosphate is bound by residues 72–73 (YK), Arg99, Lys100, Lys103, His105, and 124–132 (DDVITAGTA). Orotate is bound by residues Thr128 and Arg156.

This sequence belongs to the purine/pyrimidine phosphoribosyltransferase family. PyrE subfamily. Homodimer. Mg(2+) is required as a cofactor.

It carries out the reaction orotidine 5'-phosphate + diphosphate = orotate + 5-phospho-alpha-D-ribose 1-diphosphate. It participates in pyrimidine metabolism; UMP biosynthesis via de novo pathway; UMP from orotate: step 1/2. Catalyzes the transfer of a ribosyl phosphate group from 5-phosphoribose 1-diphosphate to orotate, leading to the formation of orotidine monophosphate (OMP). This Pseudoalteromonas translucida (strain TAC 125) protein is Orotate phosphoribosyltransferase.